Here is a 27-residue protein sequence, read N- to C-terminus: Caerulein precursor fragment R4 (27 aa).

Expressed by the skin glands.

It localises to the secreted. In terms of biological role, antimicrobial peptide. The chain is Caerulein precursor fragment R4 from Xenopus ruwenzoriensis (Uganda clawed frog).